The chain runs to 190 residues: Potassium-transporting ATPase KdpC subunit (190 aa).

Residues 15–35 form a helical membrane-spanning segment; the sequence is LWILTALIYPAIVLVIGQLVF.

This sequence belongs to the KdpC family. In terms of assembly, the system is composed of three essential subunits: KdpA, KdpB and KdpC.

Its subcellular location is the cell inner membrane. Functionally, part of the high-affinity ATP-driven potassium transport (or Kdp) system, which catalyzes the hydrolysis of ATP coupled with the electrogenic transport of potassium into the cytoplasm. This subunit acts as a catalytic chaperone that increases the ATP-binding affinity of the ATP-hydrolyzing subunit KdpB by the formation of a transient KdpB/KdpC/ATP ternary complex. This is Potassium-transporting ATPase KdpC subunit from Synechocystis sp. (strain ATCC 27184 / PCC 6803 / Kazusa).